The chain runs to 3413 residues: MGSQTLEILRQGVWASLTGGYFYDPHQGVFCNVVHLYLWLYLLCSPFVAYLYFPSTWLTWCLYCVITSLTILMVKLANLALHRLYDRAQTMSEGNLKGQFVKVTKETEPRHDDEGGIEMKVIRPGGSRISGEQAINEASEENSIMSIDNVNSIIDLKVDVHRKNSSESIELMFYAPSMLSGGSQQDQQSLAGSASVSKSIRSTGPGGNSSTSAAAQADMFNKYLTVYPEVVEAAGSSAGSADGGSSGGDSRSGAAVSTLGHTGAGTAPAQHVRTGHLSRKCSEVFSRRHRRRLERQSSLDTAAAAANSNAENKLMRNQSDTIATAAPSFLHSQPTNKARGQTNPRQHFITSAPSTGIGGGDAPTSSTAVVVIAPASNSLVNPGRSSRLQRHRSSETHDERLKHQSRGGLFQPILQLPHHSAASSIGALAVLGGGGNVAANDVEDMELGLVRNAGSGGVADACSRALQSWILDPFPDGYLEDDSYTKSDLGIEQPHQPTFRTQHRHHHHHHHLHHHLGGAIIRKDPTSTMSALQLAAVTQPGTGGSVTGGGGAAGGGGSAAGMKRRRHSNATSYKHGSSQSNKSSLVGGGGSRGPSGEAGTSGGAGGTGGVRRIKSAALEVLCPQPSVSNLSPHPNSVEAISGQQQMRNPLPPPSKSLVRNQHLNLYPTQGYGDGTPSAGGGGPGNSSTCSSLFFGSSSACGSTTALIEPPVYPIVEHSDEKTAHEEHGDDCLGIGQGNADDDDEVDDVPIRRRTRALGCSQTHYSVESDVGGFLADEVGADEDVFKDFDDNLEHILSELQQTHNQLDDVLKTHDLHHHSHLHHHKAASVEGAGPSGGSVAVGVSAGNDDEDEETEDNNTGSRSPLLNDRNRQPATLREIQADKQLRQELSHQSGAVIPAPNPPVPIRSEADSGCPSSDCEQVSASSKDQLLSGIELELQQYQILQRCQLDEEQPCTSKMAAKSLGAIPKVVKYREVDELRRRRRGGSPADAAEAGNEFALVKQTKQASRNSSSSNSTHSISLTDSLTADIHKMLWLMHGGAVDDRGRPITGTSADGTPIPASSSLVPPNMSNAHFQFYQDAIQALQGTHPTSGSSVEHMTNIELARDKLRLDAKLMCEQLVAAAEANSGVRGNTLATQQMTQQQVGMLMRGGSSSRHPSSAPFSVQGLINVIRSERPAARSQLDALQQLSDAAAALAANASEAASVSASGAGGGASSGGGGVLSALGLANHPSNQISQISQLSQMSQPMLNVDGHFAPYCDYWRPACLLSATEKPAAPKSFYKYRFKWCGQEHEFKIAMDRLELLALFDRDLHWMHVLLASLLCTLVACLGAAILQHDHYKDLCALLFCAVIAGAQYSLVKSVQPDAASPVHGFNKTVAYSRAIYFCLAGGMLLLLKRLDTDYGERTPDPVVFFGMRYSPADVVALLLQALYILLLCFPIIFSVGLCPQINTFLMYLLEQIDMHVFGGNAASSLLGSFLCVVRSVLAVMLLYGPLYGALDEQRGTQYILFSIFCAMLVPLGYHLSRCASDFSHLWRLIKTCIVSTYRDDEDEDLSQMQHIATGTVTGSGTANSTALQLTTSTPKQHRQTDVKTEHEQIELSSLEKLTVNEEHHEKDHGADDQLETDQDLPLQQKHSKSKTSSLGSSQQTLGKTISSSKRAITASSSCTSIGTGEPAVEAGALTEEAVEGEEQRRNTLAGEVGSKHELAENYDQAAKIDECEDKISSSSATNPGDMSTLTAGAGTATTDATPACLEADPDAEAEAPADEKQHQGILGTGTGTGTGTTEASENGSGGGANGNTNSNGTGNDLPDPLPRKLQATVTTRLKNDLVVMTLLAVSVLGLHCSTVFTALQPDLNVVLYSFIGVLGLLLHYIVPQMRKHMPWLCFSRPLLRQREFGQFEVLNAPKIMWFEKLYIYLSVLERNVLFPLLAISSLTADSQLIVAKFGLPWGTLIVAICALKFVRNAYSDPTNQYLIIIFTVLLFRIDFAMATETFIIDYFFVSLAFRKCCDFLLKLQFIVTYIAPWQITWGSAFHAFAQPFSVPHSAMLFLQAAISAVLSTPLNPFLGSAIFLTSYVRPIKFWERDYNTRRIDHSNTRLSSQLERDLGADDNNLNSIFYEHLTRSLQHSLCGDLLMGRWGNVNQGDCFVLASDDLNCLVHIIELGNGLCTFQMRGLEFRGTYCQQREVEAITEDVEDNDGCCCCDPGHLPQLLSANAMFSTRWLAWQVVAAQYVIEGYSISDNLASATLQVFEYRKVLITYYIKSIIYYVVKNPKLEQWLASGPIQDALQHTLSRQFVDLDPIFNFNLDEDFDFRAVGITRSSFCYVYLKWINYCVDMRRDANSMGGAPPAQAPAAAGGASSAPATAGVAPPAPVTPAHNDSKSTPNLSAHGGQAGPSSGQSKSQSQQQLRRPQKSVAQETSVGGGGVVVGGTTVPGTGGVTGGGGDPQLSSSHSFANISRQTSESAPGLGGYVAYMDQNVFVKLAKSSTTTGAGAGAPTSRKESQEKPALRLKLASVGKDAPLVSLCLALGLLARRSLATASHSALTGVEFFLHGLHALFKGDFRITSPRDEWVFADMELLHSVVAPAVKMALKLQQDHITNPDEFLDPHALYDAIDNCSNELVISHEADPVWRSAVLRGAPNLLALRHVMEDGSDEYRIIRLTKRCLSFRVIKLNRECVRGLWAGQQQELIYLRNRNPERGSIQNAKQALRNIINSSCDQPIGYPIYVSPLTTSYADTNAQLCEVIGGAITLDTIRHTVLGWWHRIRERCRQGCSSGSALEPHPGSGPVQLGACNFGSGGSVVGAASTATGVGASTGSGLGVAAPGTAGSTGGESGDLAPVFISAPLYNTLTVNSYYSVRPGNVPGGPIPGNLGGNYVSDSLAVVRGGLAVMPVKPTSTTLIAGLLNRERDETSGSGIMGAGASGPTRATSSGGVRSRRPEVGSSRGRDHERRATLPIASGGAGGEPGKDLTAPQTQVEHEPSPRSTKLSSSSGSLGLGMGVGLGNIITTPGDYPRKTKGPICLTAVDTGTSSSAAEGKPAGSGTVAGTGVGGVIRKPRIEIFKKVIIVDDTGIYDCLDIIDAVVWPTERMRNNGGRLSWKDWEPSAGMVGHVVHCWTPNHKDIRFRSHVNRYVYLVEIGDHYVPVEELGLREYNQIMGSTEEMANSRRSSIQRDFHEYNIQLKLAGLAPIIGGGESSTATTSDASKSHKAKIRAVSSSSSEDEDTSSTRSIPLPQGDDGDLTNFTRLVSMWKEIILDNNKRRLYDMGELSPELLQKLDDAVQQQQQLEDALAEESKEKGTATVTANEGEEGVGEMEIEPEQEQKEVVYLEEQSPLEEVTVSKPDEQPAQPTIPASPVPAETSSTSSAKSTSSPSLCQEEEDAVDPEETPELASEESPSDENGESEAGTTV.

Helical transmembrane passes span 33–53 and 57–77; these read VVHL…YLYF and WLTW…VKLA. N164 carries N-linked (GlcNAc...) asparagine glycosylation. Residues 182–195 show a composition bias toward low complexity; that stretch reads GSQQDQQSLAGSAS. Disordered regions lie at residues 182–213 and 235–314; these read GSQQ…STSA and GSSA…ENKL. Over residues 196–213 the composition is skewed to polar residues; sequence VSKSIRSTGPGGNSSTSA. N-linked (GlcNAc...) asparagine glycosylation occurs at N208. The segment covering 302–312 has biased composition (low complexity); sequence AAAAANSNAEN. N317 is a glycosylation site (N-linked (GlcNAc...) asparagine). Disordered regions lie at residues 327–363, 379–403, 540–609, and 625–651; these read PSFL…GDAP, LVNP…RLKH, PGTG…GTGG, and PSVS…NPLP. Residues 330–354 show a composition bias toward polar residues; it reads LHSQPTNKARGQTNPRQHFITSAPS. The span at 392–402 shows a compositional bias: basic and acidic residues; it reads RSSETHDERLK. The segment covering 541–559 has biased composition (gly residues); the sequence is GTGGSVTGGGGAAGGGGSA. 2 N-linked (GlcNAc...) asparagine glycosylation sites follow: N569 and N581. Residues 569-582 show a composition bias toward polar residues; it reads NATSYKHGSSQSNK. The span at 599–609 shows a compositional bias: gly residues; sequence GTSGGAGGTGG. Polar residues predominate over residues 625–634; sequence PSVSNLSPHP. N-linked (GlcNAc...) asparagine glycosylation occurs at N685. Positions 720–730 are enriched in basic and acidic residues; the sequence is EKTAHEEHGDD. Disordered regions lie at residues 720–745, 816–873, 886–921, and 1002–1021; these read EKTA…DDEV, HHHS…NRQP, RQEL…DCEQ, and KQTK…HSIS. Positions 816–826 are enriched in basic residues; the sequence is HHHSHLHHHKA. The segment covering 828–846 has biased composition (low complexity); sequence SVEGAGPSGGSVAVGVSAG. Over residues 847–856 the composition is skewed to acidic residues; that stretch reads NDDEDEETED. N857 carries an N-linked (GlcNAc...) asparagine glycan. Residues 1008 to 1021 are compositionally biased toward low complexity; sequence SRNSSSSNSTHSIS. N1010, N1015, N1069, and N1199 each carry an N-linked (GlcNAc...) asparagine glycan. The next 2 helical transmembrane spans lie at 1315 to 1335 and 1343 to 1363; these read MHVL…AAIL and LCAL…VKSV. An N-linked (GlcNAc...) asparagine glycan is attached at N1375. 4 helical membrane-spanning segments follow: residues 1376 to 1396, 1423 to 1443, 1474 to 1494, and 1504 to 1524; these read KTVA…LLLL, VVAL…IIFS, LLGS…LYGP, and GTQY…GYHL. Residue N1572 is glycosylated (N-linked (GlcNAc...) asparagine). Disordered regions lie at residues 1577–1675, 1722–1744, and 1760–1813; these read QLTT…TGEP, DKIS…GAGT, and AEAE…LPDP. Composition is skewed to basic and acidic residues over residues 1587–1598 and 1607–1620; these read RQTDVKTEHEQI and TVNE…HGAD. Residues 1639–1666 show a composition bias toward low complexity; that stretch reads KTSSLGSSQQTLGKTISSSKRAITASSS. Residues 1725–1738 show a composition bias toward polar residues; that stretch reads SSSSATNPGDMSTL. 5 consecutive repeat copies span residues 1776–1777, 1778–1779, 1780–1781, 1782–1783, and 1784–1785. The tract at residues 1776-1785 is 5 X 2 AA tandem repeats of G-T; that stretch reads GTGTGTGTGT. 2 N-linked (GlcNAc...) asparagine glycosylation sites follow: N1791 and N1804. Residues 1799–1808 show a composition bias toward low complexity; sequence GNTNSNGTGN. 5 helical membrane-spanning segments follow: residues 1830 to 1850, 1856 to 1876, 1914 to 1934, 1940 to 1960, and 1976 to 1996; these read LVVM…TVFT, LNVV…YIVP, LYIY…AISS, QLIV…ICAL, and IIIF…ETFI. Residues 2344–2463 are disordered; the sequence is SMGGAPPAQA…HSFANISRQT (120 aa). A compositionally biased stretch (low complexity) spans 2346 to 2370; that stretch reads GGAPPAQAPAAAGGASSAPATAGVA. N-linked (GlcNAc...) asparagine glycans are attached at residues N2380 and N2387. Residues 2389 to 2411 are compositionally biased toward low complexity; that stretch reads SAHGGQAGPSSGQSKSQSQQQLR. The segment covering 2437-2447 has biased composition (gly residues); sequence GTGGVTGGGGD. Polar residues predominate over residues 2449–2463; the sequence is QLSSSHSFANISRQT. N-linked (GlcNAc...) asparagine glycosylation is found at N2458, N2619, and N2717. Disordered regions lie at residues 2908–2997 and 3198–3242; these read LNRE…SSGS and ESST…GDDG. The segment covering 2940-2956 has biased composition (basic and acidic residues); sequence RRPEVGSSRGRDHERRA. N-linked (GlcNAc...) asparagine glycosylation is present at N3246. Positions 3295 to 3413 are disordered; sequence AEESKEKGTA…NGESEAGTTV (119 aa). Residues 3310–3323 are compositionally biased toward acidic residues; the sequence is EGEEGVGEMEIEPE. Positions 3364–3377 are enriched in low complexity; that stretch reads TSSTSSAKSTSSPS. The span at 3380 to 3406 shows a compositional bias: acidic residues; that stretch reads QEEEDAVDPEETPELASEESPSDENGE.

This sequence belongs to the pecanex family.

The protein resides in the membrane. In terms of biological role, involved in neurogenesis. This Drosophila melanogaster (Fruit fly) protein is Protein pecanex (pcx).